The sequence spans 207 residues: Large ribosomal subunit protein uL4 (207 aa).

The interval 44–77 (RRQGTHDTKTRSEVRGGGRKPWRQKGTGRARHGT) is disordered. A compositionally biased stretch (basic and acidic residues) spans 47-59 (GTHDTKTRSEVRG). The segment covering 60–77 (GGRKPWRQKGTGRARHGT) has biased composition (basic residues).

Belongs to the universal ribosomal protein uL4 family. As to quaternary structure, part of the 50S ribosomal subunit.

One of the primary rRNA binding proteins, this protein initially binds near the 5'-end of the 23S rRNA. It is important during the early stages of 50S assembly. It makes multiple contacts with different domains of the 23S rRNA in the assembled 50S subunit and ribosome. Functionally, forms part of the polypeptide exit tunnel. This chain is Large ribosomal subunit protein uL4, found in Desulforudis audaxviator (strain MP104C).